Consider the following 296-residue polypeptide: tRNA dimethylallyltransferase (296 aa).

An ATP-binding site is contributed by Gly11–Thr18. Substrate is bound at residue Thr13–Thr18. An interaction with substrate tRNA region spans residues Asp36–Gln39.

It belongs to the IPP transferase family. Monomer. Requires Mg(2+) as cofactor.

The catalysed reaction is adenosine(37) in tRNA + dimethylallyl diphosphate = N(6)-dimethylallyladenosine(37) in tRNA + diphosphate. Catalyzes the transfer of a dimethylallyl group onto the adenine at position 37 in tRNAs that read codons beginning with uridine, leading to the formation of N6-(dimethylallyl)adenosine (i(6)A). The protein is tRNA dimethylallyltransferase of Streptococcus equi subsp. zooepidemicus (strain H70).